We begin with the raw amino-acid sequence, 148 residues long: Large ribosomal subunit protein bL9 (148 aa).

Positions 46–65 (QLQQQNKHAEQEREQEIEDA) are disordered. The segment covering 52–65 (KHAEQEREQEIEDA) has biased composition (basic and acidic residues).

This sequence belongs to the bacterial ribosomal protein bL9 family.

In terms of biological role, binds to the 23S rRNA. In Staphylococcus carnosus (strain TM300), this protein is Large ribosomal subunit protein bL9.